The chain runs to 1807 residues: Vitellogenin-2 (1807 aa).

Residues 1 to 16 (MWFPVTLLFLAGVAVA) form the signal peptide. One can recognise a Vitellogenin domain in the interval 24–819 (WETGNEYQYS…LIPKYVYVGV (796 aa)). The cysteines at positions 180 and 224 are disulfide-linked. A disordered region spans residues 334-402 (SDSDNRRVRH…SSSSSSEEEN (69 aa)). A compositionally biased stretch (low complexity) spans 346–397 (VSQNSEQENSSESSKSSSQSSSSSSSASSSSSSSSSSSSSSSSSSSSSSSSS). Residues asparagine 354, asparagine 579, asparagine 635, asparagine 1181, asparagine 1304, asparagine 1373, and asparagine 1506 are each glycosylated (N-linked (GlcNAc...) asparagine). The 189-residue stretch at 1448–1636 (QSCTLDKDKV…TYAMTQENCQ (189 aa)) folds into the VWFD domain. 2 disulfide bridges follow: cysteine 1450-cysteine 1599 and cysteine 1472-cysteine 1635. Disordered regions lie at residues 1635–1655 (CQGP…HEFP) and 1684–1723 (NRNK…KKHN). Asparagine 1693 carries N-linked (GlcNAc...) asparagine glycosylation. Over residues 1700 to 1714 (KKQYQANSQESGSSE) the composition is skewed to polar residues.

The protein resides in the secreted. Functionally, precursor of the egg-yolk proteins that are sources of nutrients during embryonic development. This is Vitellogenin-2 from Solenopsis invicta (Red imported fire ant).